Here is a 180-residue protein sequence, read N- to C-terminus: Centromere protein M (180 aa).

In terms of assembly, component of the CENPA-NAC complex, at least composed of CENPA, CENPC, CENPH, CENPM, CENPN, CENPT and CENPU. The CENPA-NAC complex interacts with the CENPA-CAD complex, composed of CENPI, CENPK, CENPL, CENPO, CENPP, CENPQ, CENPR and CENPS.

It is found in the nucleus. The protein localises to the cytoplasm. The protein resides in the chromosome. It localises to the centromere. Its subcellular location is the kinetochore. Functionally, component of the CENPA-NAC (nucleosome-associated) complex, a complex that plays a central role in assembly of kinetochore proteins, mitotic progression and chromosome segregation. The CENPA-NAC complex recruits the CENPA-CAD (nucleosome distal) complex and may be involved in incorporation of newly synthesized CENPA into centromeres. This chain is Centromere protein M (CENPM), found in Bos taurus (Bovine).